The following is a 595-amino-acid chain: Aspartate--tRNA(Asp/Asn) ligase (595 aa).

Glu175 is an L-aspartate binding site. The tract at residues 199-202 (QQYK) is aspartate. Positions 221 and 454 each coordinate L-aspartate. 221–223 (RDE) lines the ATP pocket. Glu488 is an ATP binding site. An L-aspartate-binding site is contributed by Arg495. ATP is bound at residue 540-543 (GIDR).

This sequence belongs to the class-II aminoacyl-tRNA synthetase family. Type 1 subfamily. Homodimer.

The protein localises to the cytoplasm. The enzyme catalyses tRNA(Asx) + L-aspartate + ATP = L-aspartyl-tRNA(Asx) + AMP + diphosphate. Aspartyl-tRNA synthetase with relaxed tRNA specificity since it is able to aspartylate not only its cognate tRNA(Asp) but also tRNA(Asn). Reaction proceeds in two steps: L-aspartate is first activated by ATP to form Asp-AMP and then transferred to the acceptor end of tRNA(Asp/Asn). This chain is Aspartate--tRNA(Asp/Asn) ligase, found in Agrobacterium fabrum (strain C58 / ATCC 33970) (Agrobacterium tumefaciens (strain C58)).